The sequence spans 290 residues: MKKLRIGARDSKLSRIQVDIVARKIKQTLGIECEFVPIKTKGDIDKTKSLKDFKSPGVFVKEIELALLSREIDLAVHSLKDLPCEMDSNFEIVAVVEREDPRDVLVSKDGVGFYQLKPNAKIGTSSLRREVHLKNLRQDIQVVNIRGNIETRLSKIESEGLDGVVLAYAALKRLNLDSHVSYIFDVNEITPCPGQGAICIECLKDSPYKNILSKINDADAYIQTQFERLVLKFLGGGCHSSIGVFCKTDQDKIYAFASILSGDKLIKASIEGDKDDFLSLANKLSNMLKS.

C238 is modified (S-(dipyrrolylmethanemethyl)cysteine).

It belongs to the HMBS family. Monomer. Dipyrromethane serves as cofactor.

It carries out the reaction 4 porphobilinogen + H2O = hydroxymethylbilane + 4 NH4(+). Its pathway is porphyrin-containing compound metabolism; protoporphyrin-IX biosynthesis; coproporphyrinogen-III from 5-aminolevulinate: step 2/4. Tetrapolymerization of the monopyrrole PBG into the hydroxymethylbilane pre-uroporphyrinogen in several discrete steps. This is Porphobilinogen deaminase from Caldicellulosiruptor saccharolyticus (strain ATCC 43494 / DSM 8903 / Tp8T 6331).